We begin with the raw amino-acid sequence, 259 residues long: 3-deoxy-manno-octulosonate cytidylyltransferase (259 aa).

This sequence belongs to the KdsB family.

The protein localises to the cytoplasm. The enzyme catalyses 3-deoxy-alpha-D-manno-oct-2-ulosonate + CTP = CMP-3-deoxy-beta-D-manno-octulosonate + diphosphate. It functions in the pathway nucleotide-sugar biosynthesis; CMP-3-deoxy-D-manno-octulosonate biosynthesis; CMP-3-deoxy-D-manno-octulosonate from 3-deoxy-D-manno-octulosonate and CTP: step 1/1. The protein operates within bacterial outer membrane biogenesis; lipopolysaccharide biosynthesis. Its function is as follows. Activates KDO (a required 8-carbon sugar) for incorporation into bacterial lipopolysaccharide in Gram-negative bacteria. The polypeptide is 3-deoxy-manno-octulosonate cytidylyltransferase (Xanthomonas axonopodis pv. citri (strain 306)).